A 240-amino-acid chain; its full sequence is Ribonuclease PH (240 aa).

Phosphate contacts are provided by residues Arg87 and Gly125 to Arg127.

The protein belongs to the RNase PH family. In terms of assembly, homohexameric ring arranged as a trimer of dimers.

The catalysed reaction is tRNA(n+1) + phosphate = tRNA(n) + a ribonucleoside 5'-diphosphate. Its function is as follows. Phosphorolytic 3'-5' exoribonuclease that plays an important role in tRNA 3'-end maturation. Removes nucleotide residues following the 3'-CCA terminus of tRNAs; can also add nucleotides to the ends of RNA molecules by using nucleoside diphosphates as substrates, but this may not be physiologically important. Probably plays a role in initiation of 16S rRNA degradation (leading to ribosome degradation) during starvation. The sequence is that of Ribonuclease PH from Pseudomonas putida (strain ATCC 47054 / DSM 6125 / CFBP 8728 / NCIMB 11950 / KT2440).